Reading from the N-terminus, the 1108-residue chain is DNA-directed RNA polymerase subunit beta (1108 aa).

This sequence belongs to the RNA polymerase beta chain family. In plastids the minimal PEP RNA polymerase catalytic core is composed of four subunits: alpha, beta, beta', and beta''. When a (nuclear-encoded) sigma factor is associated with the core the holoenzyme is formed, which can initiate transcription.

Its subcellular location is the plastid. It is found in the chloroplast. It catalyses the reaction RNA(n) + a ribonucleoside 5'-triphosphate = RNA(n+1) + diphosphate. DNA-dependent RNA polymerase catalyzes the transcription of DNA into RNA using the four ribonucleoside triphosphates as substrates. The chain is DNA-directed RNA polymerase subunit beta from Gnetum parvifolium (Small-leaved jointfir).